A 154-amino-acid polypeptide reads, in one-letter code: Ribosome maturation factor RimP (154 aa).

It belongs to the RimP family.

The protein localises to the cytoplasm. Its function is as follows. Required for maturation of 30S ribosomal subunits. This Ruthia magnifica subsp. Calyptogena magnifica protein is Ribosome maturation factor RimP.